The primary structure comprises 270 residues: 4-hydroxy-tetrahydrodipicolinate reductase (270 aa).

7–12 (GANGRM) is a binding site for NAD(+). Arg-34 provides a ligand contact to NADP(+). NAD(+) is bound by residues 97–99 (GTT) and 121–124 (SGNM). Residue His-155 is the Proton donor/acceptor of the active site. His-156 serves as a coordination point for (S)-2,3,4,5-tetrahydrodipicolinate. The active-site Proton donor is Lys-159. (S)-2,3,4,5-tetrahydrodipicolinate is bound at residue 165 to 166 (GT).

The protein belongs to the DapB family.

The protein localises to the cytoplasm. The enzyme catalyses (S)-2,3,4,5-tetrahydrodipicolinate + NAD(+) + H2O = (2S,4S)-4-hydroxy-2,3,4,5-tetrahydrodipicolinate + NADH + H(+). The catalysed reaction is (S)-2,3,4,5-tetrahydrodipicolinate + NADP(+) + H2O = (2S,4S)-4-hydroxy-2,3,4,5-tetrahydrodipicolinate + NADPH + H(+). Its pathway is amino-acid biosynthesis; L-lysine biosynthesis via DAP pathway; (S)-tetrahydrodipicolinate from L-aspartate: step 4/4. In terms of biological role, catalyzes the conversion of 4-hydroxy-tetrahydrodipicolinate (HTPA) to tetrahydrodipicolinate. The protein is 4-hydroxy-tetrahydrodipicolinate reductase of Bartonella tribocorum (strain CIP 105476 / IBS 506).